A 156-amino-acid chain; its full sequence is Small ribosomal subunit protein uS7 (156 aa).

This sequence belongs to the universal ribosomal protein uS7 family. As to quaternary structure, part of the 30S ribosomal subunit. Contacts proteins S9 and S11.

In terms of biological role, one of the primary rRNA binding proteins, it binds directly to 16S rRNA where it nucleates assembly of the head domain of the 30S subunit. Is located at the subunit interface close to the decoding center, probably blocks exit of the E-site tRNA. This chain is Small ribosomal subunit protein uS7, found in Corynebacterium jeikeium (strain K411).